The sequence spans 123 residues: UPF0102 protein Dole_2298 (123 aa).

It belongs to the UPF0102 family.

In Desulfosudis oleivorans (strain DSM 6200 / JCM 39069 / Hxd3) (Desulfococcus oleovorans), this protein is UPF0102 protein Dole_2298.